Here is a 270-residue protein sequence, read N- to C-terminus: Glucosamine-6-phosphate deaminase (270 aa).

The Proton acceptor; for enolization step role is filled by Asp72. Asp141 functions as the For ring-opening step in the catalytic mechanism. His143 functions as the Proton acceptor; for ring-opening step in the catalytic mechanism. Glu148 acts as the For ring-opening step in catalysis.

The protein belongs to the glucosamine/galactosamine-6-phosphate isomerase family. NagB subfamily. Homohexamer.

The catalysed reaction is alpha-D-glucosamine 6-phosphate + H2O = beta-D-fructose 6-phosphate + NH4(+). The protein operates within amino-sugar metabolism; N-acetylneuraminate degradation; D-fructose 6-phosphate from N-acetylneuraminate: step 5/5. Its activity is regulated as follows. Allosterically activated by N-acetylglucosamine 6-phosphate (GlcNAc6P). Catalyzes the reversible isomerization-deamination of glucosamine 6-phosphate (GlcN6P) to form fructose 6-phosphate (Fru6P) and ammonium ion. The protein is Glucosamine-6-phosphate deaminase of Haemophilus influenzae (strain 86-028NP).